Here is a 258-residue protein sequence, read N- to C-terminus: MKYLSAILEEKRREVEALKRQNPSARYRDVASSLPSCRGFARALQGEGGSIRLIAEVKKASPSRGVIVEDFDPVRIALAYEALGASALSVLTDRHFFQGSAGYLQQVAAAVSLPVLRKDFIIDELQIFESRIMGADAILLIVAALEPSELHDYLQMAGEIGLDVLVEVHDRHELALAIESGAEVVGVNNRNLKDFSVDPATSASLRPYFPSGVIAVSESGLKTADDIALVRDAGFDAVLIGEGLQVSSELRSLSWPNA.

Belongs to the TrpC family.

It catalyses the reaction 1-(2-carboxyphenylamino)-1-deoxy-D-ribulose 5-phosphate + H(+) = (1S,2R)-1-C-(indol-3-yl)glycerol 3-phosphate + CO2 + H2O. It functions in the pathway amino-acid biosynthesis; L-tryptophan biosynthesis; L-tryptophan from chorismate: step 4/5. This chain is Indole-3-glycerol phosphate synthase, found in Chlorobium phaeovibrioides (strain DSM 265 / 1930) (Prosthecochloris vibrioformis (strain DSM 265)).